We begin with the raw amino-acid sequence, 98 residues long: uncharacterized protein (98 aa).

A signal peptide spans 1–23 (MKKMQSIVLALSLVLVAPMAAQA). The disordered stretch occupies residues 68–98 (WHLHGPPPPPRHHKKAPHDHHGGHGPGKHHR). Over residues 77 to 98 (PRHHKKAPHDHHGGHGPGKHHR) the composition is skewed to basic residues.

This sequence to E.coli YpeC.

This is an uncharacterized protein from Escherichia coli (strain K12).